Reading from the N-terminus, the 1368-residue chain is DNA-directed RNA polymerase subunit beta (1368 aa).

The protein belongs to the RNA polymerase beta chain family. The RNAP catalytic core consists of 2 alpha, 1 beta, 1 beta' and 1 omega subunit. When a sigma factor is associated with the core the holoenzyme is formed, which can initiate transcription.

The catalysed reaction is RNA(n) + a ribonucleoside 5'-triphosphate = RNA(n+1) + diphosphate. DNA-dependent RNA polymerase catalyzes the transcription of DNA into RNA using the four ribonucleoside triphosphates as substrates. The polypeptide is DNA-directed RNA polymerase subunit beta (Desulfosudis oleivorans (strain DSM 6200 / JCM 39069 / Hxd3) (Desulfococcus oleovorans)).